A 64-amino-acid chain; its full sequence is uncharacterized protein (64 aa).

This is an uncharacterized protein from Archaeoglobus fulgidus (strain ATCC 49558 / DSM 4304 / JCM 9628 / NBRC 100126 / VC-16).